Reading from the N-terminus, the 210-residue chain is uncharacterized protein (210 aa).

This is an uncharacterized protein from Fowl adenovirus A serotype 1 (strain CELO / Phelps) (FAdV-1).